The primary structure comprises 451 residues: tRNA-2-methylthio-N(6)-dimethylallyladenosine synthase (451 aa).

The MTTase N-terminal domain occupies 3 to 120 (LKLHIKTYGC…LPEMINHVRI (118 aa)). [4Fe-4S] cluster contacts are provided by cysteine 12, cysteine 49, cysteine 83, cysteine 157, cysteine 161, and cysteine 164. The Radical SAM core domain maps to 143–375 (QAKGPTAFVS…QECIRKQAMK (233 aa)). A TRAM domain is found at 378–441 (QAMKGTVQCI…SNSLRGELIS (64 aa)).

Belongs to the methylthiotransferase family. MiaB subfamily. Monomer. [4Fe-4S] cluster serves as cofactor.

The protein resides in the cytoplasm. The catalysed reaction is N(6)-dimethylallyladenosine(37) in tRNA + (sulfur carrier)-SH + AH2 + 2 S-adenosyl-L-methionine = 2-methylsulfanyl-N(6)-dimethylallyladenosine(37) in tRNA + (sulfur carrier)-H + 5'-deoxyadenosine + L-methionine + A + S-adenosyl-L-homocysteine + 2 H(+). Functionally, catalyzes the methylthiolation of N6-(dimethylallyl)adenosine (i(6)A), leading to the formation of 2-methylthio-N6-(dimethylallyl)adenosine (ms(2)i(6)A) at position 37 in tRNAs that read codons beginning with uridine. The sequence is that of tRNA-2-methylthio-N(6)-dimethylallyladenosine synthase from Baumannia cicadellinicola subsp. Homalodisca coagulata.